The primary structure comprises 451 residues: Eukaryotic translation initiation factor 3 subunit E (451 aa).

The PCI domain occupies 256–425 (TDLFFSPAYI…GTVIMNHPPQ (170 aa)).

It belongs to the eIF-3 subunit E family. As to quaternary structure, component of the eukaryotic translation initiation factor 3 (eIF-3) complex.

The protein resides in the cytoplasm. In terms of biological role, component of the eukaryotic translation initiation factor 3 (eIF-3) complex, which is involved in protein synthesis of a specialized repertoire of mRNAs and, together with other initiation factors, stimulates binding of mRNA and methionyl-tRNAi to the 40S ribosome. The eIF-3 complex specifically targets and initiates translation of a subset of mRNAs involved in cell proliferation. The protein is Eukaryotic translation initiation factor 3 subunit E (int6) of Aspergillus oryzae (strain ATCC 42149 / RIB 40) (Yellow koji mold).